The following is a 301-amino-acid chain: Ribosomal RNA small subunit methyltransferase H (301 aa).

S-adenosyl-L-methionine is bound by residues 33–35 (GGH), Asp52, Phe79, Asp100, and Gln107.

It belongs to the methyltransferase superfamily. RsmH family.

The protein localises to the cytoplasm. It carries out the reaction cytidine(1402) in 16S rRNA + S-adenosyl-L-methionine = N(4)-methylcytidine(1402) in 16S rRNA + S-adenosyl-L-homocysteine + H(+). Specifically methylates the N4 position of cytidine in position 1402 (C1402) of 16S rRNA. The protein is Ribosomal RNA small subunit methyltransferase H of Mycoplasmopsis synoviae (strain 53) (Mycoplasma synoviae).